We begin with the raw amino-acid sequence, 501 residues long: Phase 2 flagellin (501 aa).

This sequence belongs to the bacterial flagellin family.

It localises to the secreted. Its subcellular location is the bacterial flagellum. Flagellin is the subunit protein which polymerizes to form the filaments of bacterial flagella. The protein is Phase 2 flagellin (fljB) of Salmonella abortus-equi.